The chain runs to 350 residues: Probable L-aspartate decarboxylase (350 aa).

Residue K206 is modified to N6-(pyridoxal phosphate)lysine.

This sequence belongs to the group II decarboxylase family. MfnA subfamily. Requires pyridoxal 5'-phosphate as cofactor.

The enzyme catalyses L-aspartate + H(+) = beta-alanine + CO2. It participates in cofactor biosynthesis; coenzyme A biosynthesis. Catalyzes the decarboxylation of L-aspartate to produce beta-alanine. This Haloarcula marismortui (strain ATCC 43049 / DSM 3752 / JCM 8966 / VKM B-1809) (Halobacterium marismortui) protein is Probable L-aspartate decarboxylase.